Reading from the N-terminus, the 159-residue chain is Disease resistance response protein Pi176 (159 aa).

The protein belongs to the BetVI family.

This chain is Disease resistance response protein Pi176, found in Pisum sativum (Garden pea).